The primary structure comprises 558 residues: uncharacterized protein (558 aa).

The segment at 531–558 (NEDDGTSASPTAMTFDMPPEHPFYSHYR) is disordered.

This is an uncharacterized protein from Saccharomyces cerevisiae (strain ATCC 204508 / S288c) (Baker's yeast).